The following is a 463-amino-acid chain: MRSLSSIALLSVVGAASAQAGPWAQCGGKSFSGSSECASGWKCQELNEWFSQCVPGAESTTPTVSSTPTPTDAPSVSITASATTGINKSISVSSASKSTPLPSSSSASPSPRPTGSGSFAKADGLQFSIDGETKYFAGTNAYWLPFQMNDADIDSVFDHLEQAGLKILRVWGFNDVNTAPSPGTVYFQLHDKEKSTSTINTGKDGLQRLDYVVAAAEKHGVKLIIPFVNSWDDYGGYNAYVKAYGGSKTEWFTNEKIQSVYQAYIKAVVSRYRDSPAIFAWELGNEPRCSGCSTDVIHGWATKISAYIKSLDPNHMVALGDEGMGLTIGSDQSYPYGTSEGNDFEKNLAIPDIDFGTLHLYTTDWGIKDNAWGNGWVENHAKACKAAGKPCLFEEYGMKGNHCTDELKWQKTSLSSGTAADLIWQYGQQLSTGESPKDAYSIFYGTDEWKCAVMDHMENVNKN.

Positions 1–18 (MRSLSSIALLSVVGAASA) are cleaved as a signal peptide. In terms of domain architecture, CBM1 spans 19–54 (QAGPWAQCGGKSFSGSSECASGWKCQELNEWFSQCV). The segment at 57–78 (AESTTPTVSSTPTPTDAPSVSI) is disordered. A compositionally biased stretch (low complexity) spans 59–77 (STTPTVSSTPTPTDAPSVS). The interval 75 to 118 (SVSITASATTGINKSISVSSASKSTPLPSSSSASPSPRPTGSGS) is ser-rich linker. The N-linked (GlcNAc...) asparagine glycan is linked to asparagine 87. Residues 93-118 (SSASKSTPLPSSSSASPSPRPTGSGS) show a composition bias toward low complexity. Residues 93–121 (SSASKSTPLPSSSSASPSPRPTGSGSFAK) are disordered. The interval 119 to 463 (FAKADGLQFS…MDHMENVNKN (345 aa)) is catalytic. Residues tryptophan 171 and asparagine 285 each coordinate substrate. Glutamate 286 acts as the Proton donor in catalysis. Tyrosine 361 provides a ligand contact to substrate. Glutamate 395 functions as the Nucleophile in the catalytic mechanism. Residue tryptophan 424 coordinates substrate.

The protein belongs to the glycosyl hydrolase 5 (cellulase A) family.

It is found in the secreted. The enzyme catalyses Random hydrolysis of (1-&gt;4)-beta-D-mannosidic linkages in mannans, galactomannans and glucomannans.. In terms of biological role, endo-1,4-mannanase, a crucial enzyme for depolymerization of seed galactomannans and wood galactoglucomannans. This chain is Probable mannan endo-1,4-beta-mannosidase F (manF), found in Aspergillus flavus (strain ATCC 200026 / FGSC A1120 / IAM 13836 / NRRL 3357 / JCM 12722 / SRRC 167).